We begin with the raw amino-acid sequence, 350 residues long: Sodium/calcium exchanger MaX1 (350 aa).

Helical transmembrane passes span Val4–Val24, Phe39–Ile59, Ile69–Ala89, Met101–Phe121, Leu125–Phe145, Gly202–Ala222, Val242–Ala264, Val276–Pro296, Met302–Ile322, and Arg330–Ile350.

The protein belongs to the Ca(2+):cation antiporter (CaCA) (TC 2.A.19) family.

The protein localises to the cell membrane. Calcium transport is inhibited by Na(+), K(+), Li(+), Mg(2+) or Mn(2+). Its function is as follows. Catalyzes Na(+)/Ca(2+) exchange. The transport is electrogenic with a likely stoichiometry of 3 or more Na(+) for each Ca(2+). Is K(+)-independent. This chain is Sodium/calcium exchanger MaX1 (maX1), found in Methanosarcina acetivorans (strain ATCC 35395 / DSM 2834 / JCM 12185 / C2A).